Reading from the N-terminus, the 1402-residue chain is Nuclear pore complex protein Nup160 (1402 aa).

Phosphoserine is present on residues Ser10, Ser456, Ser915, and Ser1123.

Part of the nuclear pore complex (NPC). Forms part of the NUP160 subcomplex in the nuclear pore which is composed of NUP160, NUP133, NUP107 and NUP96. This complex plays a role in RNA export and in tethering NUP98 and NUP153 to the nucleus.

It localises to the nucleus. The protein resides in the nuclear pore complex. Functions as a component of the nuclear pore complex (NPC). Involved in poly(A)+ RNA transport. This chain is Nuclear pore complex protein Nup160 (Nup160), found in Mus musculus (Mouse).